Reading from the N-terminus, the 589-residue chain is MSSSYWSETSSSSCGTQQLPEVLQCQPQHYHCYHQSSQAQQPPEKNVVYERVRTYSGPMNKVVQALDPFNSREVLSPLKTTSSYQNLVWSDHSQELHSPTLKISTCAPSTLHITQNTEQELHSPTVKLTTYPQTTIRKYVVQNPEQEPLSQFLRGSHFFPGNNVIYEKTIRKVEKLNTDQGCHPQAQCHHHIIQQPQVIHSAHWQQPDSSQQIQAITGNNPISTHIGNELCHSGSSQICEQVIIQDDGPEKLDPRYFGELLADLSRKNTDLYHCLLEHLQRIGGSKQDFESTDESEDIESLIPKGLSEFTKQQIRYILQMRGMSDKSLRLVLSTFSNIREELGHLQNDMTSLENDKMRLEKDLSFKDTQLKEYEELLASVRANNHQQQQGLQDSSSKCQALEENNLSLRHTLSDMEYRLKELEYCKRNLEQENQNLRMQVSETCTGPMLQAKMDEIGNHYTEMVKNLRMEKDREICRLRSQLNQYHKDVSKREGSCSDFQFKLHELTSLLEEKDSLIKRQSEELSKLRQEIYSSHNQPSTGGRTTITTKKYRTQYPILGLLYDDYEYIPPGSETQTIVIEKTEDKYTCP.

A coiled-coil region spans residues 334–443 (TFSNIREELG…QNLRMQVSET (110 aa)).

Interacts with nonmuscle actin.

The protein resides in the cell junction. It localises to the tight junction. Plays a key role in the organization of epithelial monolayers by regulating the actin cytoskeleton. May be involved in ovary development. The polypeptide is Protein POF1B (POF1B) (Homo sapiens (Human)).